Consider the following 193-residue polypeptide: Holliday junction branch migration complex subunit RuvA (193 aa).

Positions 1-64 are domain I; that stretch reads MIGRIAGTLI…EDAHLLYGFG (64 aa). Residues 65–143 are domain II; that stretch reads SAAERNTFRE…AELGHAPGAA (79 aa). Positions 144-151 are flexible linker; that stretch reads PVHDSAVD. Positions 151–193 are domain III; that stretch reads DILNALLALGYSEKEAATAIKQVPAGTGVSDGIKLALKALSKA.

The protein belongs to the RuvA family. As to quaternary structure, homotetramer. Forms an RuvA(8)-RuvB(12)-Holliday junction (HJ) complex. HJ DNA is sandwiched between 2 RuvA tetramers; dsDNA enters through RuvA and exits via RuvB. An RuvB hexamer assembles on each DNA strand where it exits the tetramer. Each RuvB hexamer is contacted by two RuvA subunits (via domain III) on 2 adjacent RuvB subunits; this complex drives branch migration. In the full resolvosome a probable DNA-RuvA(4)-RuvB(12)-RuvC(2) complex forms which resolves the HJ.

It localises to the cytoplasm. Functionally, the RuvA-RuvB-RuvC complex processes Holliday junction (HJ) DNA during genetic recombination and DNA repair, while the RuvA-RuvB complex plays an important role in the rescue of blocked DNA replication forks via replication fork reversal (RFR). RuvA specifically binds to HJ cruciform DNA, conferring on it an open structure. The RuvB hexamer acts as an ATP-dependent pump, pulling dsDNA into and through the RuvAB complex. HJ branch migration allows RuvC to scan DNA until it finds its consensus sequence, where it cleaves and resolves the cruciform DNA. This is Holliday junction branch migration complex subunit RuvA from Cupriavidus pinatubonensis (strain JMP 134 / LMG 1197) (Cupriavidus necator (strain JMP 134)).